The chain runs to 90 residues: Elongation factor 1-beta (90 aa).

This sequence belongs to the EF-1-beta/EF-1-delta family.

Its function is as follows. Promotes the exchange of GDP for GTP in EF-1-alpha/GDP, thus allowing the regeneration of EF-1-alpha/GTP that could then be used to form the ternary complex EF-1-alpha/GTP/AAtRNA. This is Elongation factor 1-beta from Staphylothermus marinus (strain ATCC 43588 / DSM 3639 / JCM 9404 / F1).